The sequence spans 289 residues: Porin (289 aa).

In terms of assembly, homotrimer.

The protein localises to the cell outer membrane. Its function is as follows. Forms channels that allow the passive diffusion of small hydrophilic solutes up to an exclusion limit of about 0.6 kDa. The sequence is that of Porin (opmA) from Fuscovulum blasticum (Rhodobacter blasticus).